Here is a 362-residue protein sequence, read N- to C-terminus: Apelin receptor A (362 aa).

Residues 1 to 37 (METEGLSPMLYEDDYYYGNETGLQPCDETDWDFSYSL) are Extracellular-facing. Asparagine 19 is a glycosylation site (N-linked (GlcNAc...) asparagine). 2 disulfides stabilise this stretch: cysteine 26-cysteine 286 and cysteine 108-cysteine 185. A helical membrane pass occupies residues 38–58 (LPVFYMIVFVLGLSGNGVVIF). At 59 to 76 (TVWKSKPKRRSADTYIGN) the chain is on the cytoplasmic side. Residues 77-97 (LALADLAFVVTLPLWATYTAL) traverse the membrane as a helical segment. Over 98–110 (GFHWPFGSALCKL) the chain is Extracellular. The chain crosses the membrane as a helical span at residues 111–131 (SSYLVLLNMFASVFCLTCLSF). Topologically, residues 132 to 151 (DRYLAIVHSLSSAKLRSRSS) are cytoplasmic. Residues 152–172 (IIVSLAVIWLFSGLLALPSLI) form a helical membrane-spanning segment. The Extracellular segment spans residues 173-199 (LRDTRVEGNNTICDLDFSGVSSKENEN). Asparagine 181 carries an N-linked (GlcNAc...) asparagine glycan. Residues 200–220 (FWIGGLSILTTVPGFLLPLLL) form a helical membrane-spanning segment. The Cytoplasmic portion of the chain corresponds to 221–248 (MTIFYCFIGGKVTMHFQNLKKEEQKKKR). The helical transmembrane segment at 249 to 269 (LLKIIITLVVVFAICWLPFHI) threads the bilayer. Over 270-296 (LKTIHFLDLMGFLELSCSTQNIIVSLH) the chain is Extracellular. A helical transmembrane segment spans residues 297 to 317 (PYATCLAYVNSCLNPFLYAFF). Topologically, residues 318-362 (DLRFRSQCFFFFGFKKVLQGHLSNTSSSLSAQTQKSEIHSLATKV) are cytoplasmic.

The protein belongs to the G-protein coupled receptor 1 family. As to expression, expressed in all blood vessels including the posterior cardinal vein, intersomitic veins and the vitelline vein network. At the gastrula stage, exclusively expressed in the mesodermal layer and at the neurula stage in the lateral plate mesoderm. Larval expression is observed in the endothelium of the primary blood vessels and the forming heart.

Its subcellular location is the cell membrane. Functionally, g protein-coupled receptor for peptide hormones apelin (apln) and apelin receptor early endogenous ligand (apela), that plays a role in the regulation of normal cardiovascular function and fluid homeostasis. When acting as apelin receptor, activates both G(i) protein pathway that inhibits adenylate cyclase activity, and the beta-arrestin pathway that promotes internalization of the receptor. Also functions as mechanoreceptor that is activated by pathological stimuli in a G-protein-independent fashion to induce beta-arrestin signaling, hence eliciting cardiac hypertrophy. However, the presence of apelin ligand blunts cardiac hypertrophic induction from APLNR/APJ on response to pathological stimuli. Plays a key role in early development such as gastrulation, blood vessels formation and heart morphogenesis by acting as a receptor for apela hormone, promoting endoderm and mesendoderm cell migration and regulating the migration of cells fated to become myocardial progenitors, respectively. Promotes angioblast migration toward the embryonic midline, i.e. the position of the future vessel formation, during vasculogenesis. May promote sinus venosus (SV)-derived endothelial cells migration into the developing heart to promote coronary blood vessel development. Required for cardiovascular development, particularly for intersomitic vein angiogenesis by acting as a receptor for apln hormone. Also plays a role in various processes in adults such as regulation of blood vessel formation, blood pressure, heart contractility, and heart failure. Acts upstream of the i/o type of G-alpha proteins in the differentiation of endothelium, erythroid cells, myeloid cells and cardiomyocytes. This Xenopus laevis (African clawed frog) protein is Apelin receptor A (aplnr-a).